We begin with the raw amino-acid sequence, 234 residues long: Probable pectate lyase F (234 aa).

Positions 1–17 (MWSSIAAFPVLVPVALA) are cleaved as a signal peptide.

Belongs to the polysaccharide lyase 3 family. Requires Ca(2+) as cofactor.

The protein localises to the secreted. It catalyses the reaction Eliminative cleavage of (1-&gt;4)-alpha-D-galacturonan to give oligosaccharides with 4-deoxy-alpha-D-galact-4-enuronosyl groups at their non-reducing ends.. In terms of biological role, pectinolytic enzyme consist of four classes of enzymes: pectin lyase, polygalacturonase, pectin methylesterase and rhamnogalacturonase. Among pectinolytic enzymes, pectin lyase is the most important in depolymerization of pectin, since it cleaves internal glycosidic bonds of highly methylated pectins. Favors pectate, the anion, over pectin, the methyl ester. The polypeptide is Probable pectate lyase F (plyF) (Aspergillus fumigatus (strain ATCC MYA-4609 / CBS 101355 / FGSC A1100 / Af293) (Neosartorya fumigata)).